We begin with the raw amino-acid sequence, 305 residues long: MWRGRDVITMRDFGRGELEELFETAKYMEKYAKSRVDFLKGKIMAVAFFEPSTRTRLSFETAMRRLGGDVIGFWGAEGTSVEKGETLADTIRMLDAYSNIIVIRHKLEGAAKLAAEVAESPVINGGDGAFNHPTQAMLDLYTIWREFGHIDGLNIGLMGDLRYARTINSLLEALANFDVRTFLISPEYLRPRAETLDYVKSRGLKLSFHTNVEEVIHELDVLYVVRVQRERFLDPLEYERVKGSYRVTLEILKKAKKHLAILHPLPRVDEIDHRLDNTPHAKYFKQAALGVPLRMALIYLILSQP.

Carbamoyl phosphate contacts are provided by Arg-54 and Thr-55. L-aspartate is bound at residue Lys-83. Arg-104, His-132, and Gln-135 together coordinate carbamoyl phosphate. 2 residues coordinate L-aspartate: Arg-165 and Arg-226. Leu-265 and Pro-266 together coordinate carbamoyl phosphate.

The protein belongs to the aspartate/ornithine carbamoyltransferase superfamily. ATCase family. As to quaternary structure, heterooligomer of catalytic and regulatory chains.

It catalyses the reaction carbamoyl phosphate + L-aspartate = N-carbamoyl-L-aspartate + phosphate + H(+). The protein operates within pyrimidine metabolism; UMP biosynthesis via de novo pathway; (S)-dihydroorotate from bicarbonate: step 2/3. Its function is as follows. Catalyzes the condensation of carbamoyl phosphate and aspartate to form carbamoyl aspartate and inorganic phosphate, the committed step in the de novo pyrimidine nucleotide biosynthesis pathway. The chain is Aspartate carbamoyltransferase catalytic subunit from Pyrobaculum arsenaticum (strain DSM 13514 / JCM 11321 / PZ6).